We begin with the raw amino-acid sequence, 179 residues long: Inosine/xanthosine triphosphatase (179 aa).

Glu71 is a Mg(2+) binding site. 71 to 72 contributes to the substrate binding site; sequence EA.

This sequence belongs to the YjjX NTPase family. As to quaternary structure, homodimer. Mg(2+) is required as a cofactor. The cofactor is Mn(2+).

It carries out the reaction XTP + H2O = XDP + phosphate + H(+). The enzyme catalyses ITP + H2O = IDP + phosphate + H(+). Its function is as follows. Phosphatase that hydrolyzes non-canonical purine nucleotides such as XTP and ITP to their respective diphosphate derivatives. Probably excludes non-canonical purines from DNA/RNA precursor pool, thus preventing their incorporation into DNA/RNA and avoiding chromosomal lesions. The chain is Inosine/xanthosine triphosphatase from Shewanella oneidensis (strain ATCC 700550 / JCM 31522 / CIP 106686 / LMG 19005 / NCIMB 14063 / MR-1).